The sequence spans 412 residues: Double C2-like domain-containing protein beta (412 aa).

Positions methionine 1–tyrosine 36 are negatively regulates targeting to plasma membrane. The tract at residues methionine 1–tyrosine 90 is mediates interaction with DYNLT1. A disordered region spans residues proline 38–aspartate 123. The span at alanine 49–serine 73 shows a compositional bias: low complexity. Positions glycine 95–lysine 108 are enriched in pro residues. Residues aspartate 112–aspartate 123 show a composition bias toward acidic residues. C2 domains follow at residues alanine 126–leucine 250 and glutamate 266–histidine 399. Residues aspartate 157, aspartate 163, aspartate 218, aspartate 220, aspartate 297, aspartate 303, aspartate 357, aspartate 359, and aspartate 365 each coordinate Ca(2+). The interval aspartate 257–asparagine 375 is mediates interaction with STXBP3. Phosphoserine is present on serine 411.

Interacts with STX4; the interaction is calcium-dependent, increased by insulin and glucose, and mediates vesicle fusion with plasma membrane in pancreatic cells and adipocytes. Interacts with STXBP3; the interaction is direct, occurs at the cell membrane and regulates glucose-stimulated insulin secretion. Interacts with cytoplasmic dynein light chain DYNLT1. Interacts with the SNARE (soluble N-ethylmaleimide-sensitive factor attached protein receptor) complex composed of SNAP25, STX1A and VAMP2; the interaction is calcium-dependent and competitive with SYT1. May interact with UNC13A; the interaction mediates targeting to the plasma membrane. Requires Ca(2+) as cofactor. As to expression, expressed in brain; highly enriched in neurons.

It is found in the cytoplasm. Its subcellular location is the cytoplasmic granule. It localises to the cell membrane. Calcium sensor which positively regulates SNARE-dependent fusion of vesicles with membranes. Binds phospholipids in a calcium-dependent manner and may act at the priming stage of fusion by modifying membrane curvature to stimulate fusion. Involved in calcium-triggered exocytosis in chromaffin cells and calcium-dependent spontaneous release of neurotransmitter in absence of action potentials in neuronal cells. Involved both in glucose-stimulated insulin secretion in pancreatic cells and insulin-dependent GLUT4 transport to the plasma membrane in adipocytes. This Rattus norvegicus (Rat) protein is Double C2-like domain-containing protein beta (Doc2b).